The following is a 270-amino-acid chain: Glutamate racemase (270 aa).

Residues 14–15 (DS) and 46–47 (YG) each bind substrate. C77 serves as the catalytic Proton donor/acceptor. A substrate-binding site is contributed by 78–79 (NT). Catalysis depends on C186, which acts as the Proton donor/acceptor. 187–188 (TH) contributes to the substrate binding site.

This sequence belongs to the aspartate/glutamate racemases family.

It carries out the reaction L-glutamate = D-glutamate. It participates in cell wall biogenesis; peptidoglycan biosynthesis. In terms of biological role, provides the (R)-glutamate required for cell wall biosynthesis. The polypeptide is Glutamate racemase (Trichodesmium erythraeum (strain IMS101)).